We begin with the raw amino-acid sequence, 231 residues long: Large ribosomal subunit protein uL1 (231 aa).

It belongs to the universal ribosomal protein uL1 family. In terms of assembly, part of the 50S ribosomal subunit.

In terms of biological role, binds directly to 23S rRNA. The L1 stalk is quite mobile in the ribosome, and is involved in E site tRNA release. Functionally, protein L1 is also a translational repressor protein, it controls the translation of the L11 operon by binding to its mRNA. The polypeptide is Large ribosomal subunit protein uL1 (Acidovorax ebreus (strain TPSY) (Diaphorobacter sp. (strain TPSY))).